We begin with the raw amino-acid sequence, 504 residues long: Glutamate--tRNA ligase (504 aa).

The short motif at 10–20 is the 'HIGH' region element; sequence PSPTGDPHVGT. A 'KMSKS' region motif is present at residues 251–255; it reads KLSKR. Lys-254 serves as a coordination point for ATP.

The protein belongs to the class-I aminoacyl-tRNA synthetase family. Glutamate--tRNA ligase type 1 subfamily. As to quaternary structure, monomer.

It is found in the cytoplasm. It catalyses the reaction tRNA(Glu) + L-glutamate + ATP = L-glutamyl-tRNA(Glu) + AMP + diphosphate. Functionally, catalyzes the attachment of glutamate to tRNA(Glu) in a two-step reaction: glutamate is first activated by ATP to form Glu-AMP and then transferred to the acceptor end of tRNA(Glu). The chain is Glutamate--tRNA ligase from Cellvibrio japonicus (strain Ueda107) (Pseudomonas fluorescens subsp. cellulosa).